The chain runs to 857 residues: Cadherin-related family member 1a (857 aa).

Positions 1–25 (MKNAREIQFSSFLLLAHFCFVGAQS) are cleaved as a signal peptide. Topologically, residues 26 to 709 (DYAPYFYDNG…RENPMHFLGL (684 aa)) are extracellular. Cadherin domains are found at residues 40 to 139 (NGNM…RPQF), 140 to 252 (QNMP…PPIF), 253 to 359 (IGTP…PPTF), 365 to 478 (PQNV…APKF), 479 to 582 (TSDF…PPAF), and 574 to 693 (DLND…GPLT). A helical membrane pass occupies residues 710–730 (ISGVILILVFVTVIISTVIFV). Over 731 to 857 (RRNKANRILP…LEQKNMANRY (127 aa)) the chain is Cytoplasmic. A disordered region spans residues 746-765 (RKKRKPQKQDDFQEPFREEQ). A compositionally biased stretch (basic and acidic residues) spans 752-765 (QKQDDFQEPFREEQ).

As to expression, expressed in photoreceptor cells of the outer nuclear layer of the retina and in the pinal gland.

Its subcellular location is the membrane. In terms of biological role, potential calcium-dependent cell-adhesion protein. Plays a role in the organization of retinal cell layers and Muller glia morphology. The protein is Cadherin-related family member 1a of Danio rerio (Zebrafish).